A 311-amino-acid chain; its full sequence is Ribonuclease HIII (311 aa).

One can recognise an RNase H type-2 domain in the interval 95 to 311 (MSIVGSDEVG…NTEKAFRLLK (217 aa)). Positions 101, 102, and 206 each coordinate a divalent metal cation.

It belongs to the RNase HII family. RnhC subfamily. The cofactor is Mn(2+). Mg(2+) is required as a cofactor.

Its subcellular location is the cytoplasm. It catalyses the reaction Endonucleolytic cleavage to 5'-phosphomonoester.. Endonuclease that specifically degrades the RNA of RNA-DNA hybrids. This is Ribonuclease HIII from Bacillus cereus (strain 03BB102).